A 370-amino-acid chain; its full sequence is Cap-specific mRNA (nucleoside-2'-O-)-methyltransferase 1 (370 aa).

In terms of domain architecture, RrmJ-type SAM-dependent 2'-O-MTase spans 87–294 (AFRNRAGHKL…ERYLVCIGFI (208 aa)). Gly-130 and Asp-207 together coordinate S-adenosyl-L-methionine. The Proton acceptor role is filled by Lys-248.

Component of a complex composed of CBF5, GAR1, NHP2, MTR1, NOP10 and Tb11.01.8210.

Its subcellular location is the nucleus. It catalyses the reaction a 5'-end (N(7)-methyl 5'-triphosphoguanosine)-ribonucleoside in mRNA + S-adenosyl-L-methionine = a 5'-end (N(7)-methyl 5'-triphosphoguanosine)-(2'-O-methyl-ribonucleoside) in mRNA + S-adenosyl-L-homocysteine + H(+). Its function is as follows. S-adenosyl-L-methionine-dependent methyltransferase that mediates RNA cap1 2'-O-ribose methylation to the 5'-cap structure of spliced leader and U1 small nuclear RNAs. Methylates the ribose of the first nucleotide of a m(7)GpppG-capped RNA to produce m(7)GpppNmp (cap1). Cap1 modification is linked to higher levels of translation. Recognizes a guanosine cap on RNA independent of its N(7) methylation status. This is Cap-specific mRNA (nucleoside-2'-O-)-methyltransferase 1 (MTR1) from Trypanosoma brucei brucei (strain 927/4 GUTat10.1).